We begin with the raw amino-acid sequence, 175 residues long: Ribosome maturation factor RimM (175 aa).

The 74-residue stretch at 100–173 folds into the PRC barrel domain; it reads EGEYYFHEII…IIIIRPMEGL (74 aa).

The protein belongs to the RimM family. In terms of assembly, binds ribosomal protein uS19.

The protein resides in the cytoplasm. In terms of biological role, an accessory protein needed during the final step in the assembly of 30S ribosomal subunit, possibly for assembly of the head region. Essential for efficient processing of 16S rRNA. May be needed both before and after RbfA during the maturation of 16S rRNA. It has affinity for free ribosomal 30S subunits but not for 70S ribosomes. This Geobacillus thermodenitrificans (strain NG80-2) protein is Ribosome maturation factor RimM.